Here is a 138-residue protein sequence, read N- to C-terminus: MTVVPAQQGGGGARGTSGLYDVLELVLDRGLVIDAFVRVSLVGIEILKIDVRVVVASVDTYLRFAEACNRLDLEAGPRKDPGLPDLVGEMTESGARGKSKGALSGAAETISDALKGSSSGSSSGSSSRSTSRKKEEQE.

The interval 74-138 is disordered; that stretch reads EAGPRKDPGL…STSRKKEEQE (65 aa). Residues 116 to 129 show a composition bias toward low complexity; that stretch reads GSSSGSSSGSSSRS.

It belongs to the gas vesicle GvpA family. In terms of assembly, the gas vesicle shell is 2 nm thick and consists of a single layer of this protein. It forms helical ribs nearly perpendicular to the long axis of the vesicle.

It localises to the gas vesicle shell. Gas vesicles are hollow, gas filled proteinaceous nanostructures found in some microorganisms. During planktonic growth they allow positioning of the organism at a favorable depth for light or nutrient acquisition. GvpA forms the protein shell. It is not clear what function gas vesicles perform in soil bacteria. The polypeptide is Gas vesicle protein A (Streptomyces sp. (strain CB03234)).